The sequence spans 67 residues: Large ribosomal subunit protein uL29 (67 aa).

It belongs to the universal ribosomal protein uL29 family.

The polypeptide is Large ribosomal subunit protein uL29 (rpmC) (Thermus thermophilus).